A 101-amino-acid chain; its full sequence is Protein Tat (101 aa).

Basic and acidic residues predominate over residues 1 to 12 (MDPVDPRLEPWK). A disordered region spans residues 1–20 (MDPVDPRLEPWKHPGSQPKA). Residues 1–24 (MDPVDPRLEPWKHPGSQPKAACTS) form an interaction with human CREBBP region. The tract at residues 1-48 (MDPVDPRLEPWKHPGSQPKAACTSCYCKKCCFHCQVCFTTKGLGISYG) is transactivation. 3 residues coordinate Zn(2+): C22, C25, and C27. Residues 22-37 (CTSCYCKKCCFHCQVC) form a cysteine-rich region. The residue at position 28 (K28) is an N6-acetyllysine; by host PCAF. Residues C30, H33, C34, and C37 each coordinate Zn(2+). The core stretch occupies residues 38–48 (FTTKGLGISYG). A compositionally biased stretch (basic residues) spans 48-57 (GRKKRRQRRR). The interval 48–101 (GRKKRRQRRRAPQDSQTHQVSLPKQPASQARGDPTGPKESKKKVERETETDPVD) is disordered. A Nuclear localization signal, RNA-binding (TAR), and protein transduction motif is present at residues 49–57 (RKKRRQRRR). The interval 49–86 (RKKRRQRRRAPQDSQTHQVSLPKQPASQARGDPTGPKE) is interaction with the host capping enzyme RNGTT. N6-acetyllysine; by host EP300 and GCN5L2 occurs at positions 50 and 51. Residues R52 and R53 each carry the asymmetric dimethylarginine; by host PRMT6 modification. Over residues 60–75 (QDSQTHQVSLPKQPAS) the composition is skewed to polar residues. A Glycyl lysine isopeptide (Lys-Gly) (interchain with G-Cter in ubiquitin) cross-link involves residue K71. Positions 78 to 80 (RGD) match the Cell attachment site motif. Positions 83-101 (GPKESKKKVERETETDPVD) are enriched in basic and acidic residues.

Belongs to the lentiviruses Tat family. As to quaternary structure, interacts with host CCNT1. Associates with the P-TEFb complex composed at least of Tat, P-TEFb (CDK9 and CCNT1), TAR RNA, RNA Pol II. Recruits the HATs CREBBP, TAF1/TFIID, EP300, PCAF and GCN5L2. Interacts with host KAT5/Tip60; this interaction targets the latter to degradation. Interacts with the host deacetylase SIRT1. Interacts with host capping enzyme RNGTT; this interaction stimulates RNGTT. Binds to host KDR, and to the host integrins ITGAV/ITGB3 and ITGA5/ITGB1. Interacts with host KPNB1/importin beta-1 without previous binding to KPNA1/importin alpha-1. Interacts with EIF2AK2. Interacts with host nucleosome assembly protein NAP1L1; this interaction may be required for the transport of Tat within the nucleus, since the two proteins interact at the nuclear rim. Interacts with host C1QBP/SF2P32; this interaction involves lysine-acetylated Tat. Interacts with the host chemokine receptors CCR2, CCR3 and CXCR4. Interacts with host DPP4/CD26; this interaction may trigger an anti-proliferative effect. Interacts with host LDLR. Interacts with the host extracellular matrix metalloproteinase MMP1. Interacts with host PRMT6; this interaction mediates Tat's methylation. Interacts with, and is ubiquitinated by MDM2/Hdm2. Interacts with host PSMC3 and HTATIP2. Interacts with STAB1; this interaction may overcome SATB1-mediated repression of IL2 and IL2RA (interleukin) in T cells by binding to the same domain than HDAC1. Interacts (when acetylated) with human CDK13, thereby increasing HIV-1 mRNA splicing and promoting the production of the doubly spliced HIV-1 protein Nef. Interacts with host TBP; this interaction modulates the activity of transcriptional pre-initiation complex. Interacts with host RELA. Interacts with host PLSCR1; this interaction negatively regulates Tat transactivation activity by altering its subcellular distribution. In terms of processing, asymmetrical arginine methylation by host PRMT6 seems to diminish the transactivation capacity of Tat and affects the interaction with host CCNT1. Post-translationally, acetylation by EP300, CREBBP, GCN5L2/GCN5 and PCAF regulates the transactivation activity of Tat. EP300-mediated acetylation of Lys-50 promotes dissociation of Tat from the TAR RNA through the competitive binding to PCAF's bromodomain. In addition, the non-acetylated Tat's N-terminus can also interact with PCAF. PCAF-mediated acetylation of Lys-28 enhances Tat's binding to CCNT1. Lys-50 is deacetylated by SIRT1. Polyubiquitination by host MDM2 does not target Tat to degradation, but activates its transactivation function and fosters interaction with CCNT1 and TAR RNA. In terms of processing, phosphorylated by EIF2AK2 on serine and threonine residues adjacent to the basic region important for TAR RNA binding and function. Phosphorylation of Tat by EIF2AK2 is dependent on the prior activation of EIF2AK2 by dsRNA.

The protein localises to the host nucleus. Its subcellular location is the host nucleolus. It is found in the host cytoplasm. The protein resides in the secreted. Transcriptional activator that increases RNA Pol II processivity, thereby increasing the level of full-length viral transcripts. Recognizes a hairpin structure at the 5'-LTR of the nascent viral mRNAs referred to as the transactivation responsive RNA element (TAR) and recruits the cyclin T1-CDK9 complex (P-TEFb complex) that will in turn hyperphosphorylate the RNA polymerase II to allow efficient elongation. The CDK9 component of P-TEFb and other Tat-activated kinases hyperphosphorylate the C-terminus of RNA Pol II that becomes stabilized and much more processive. Other factors such as HTATSF1/Tat-SF1, SUPT5H/SPT5, and HTATIP2 are also important for Tat's function. Besides its effect on RNA Pol II processivity, Tat induces chromatin remodeling of proviral genes by recruiting the histone acetyltransferases (HATs) CREBBP, EP300 and PCAF to the chromatin. This also contributes to the increase in proviral transcription rate, especially when the provirus integrates in transcriptionally silent region of the host genome. To ensure maximal activation of the LTR, Tat mediates nuclear translocation of NF-kappa-B by interacting with host RELA. Through its interaction with host TBP, Tat may also modulate transcription initiation. Tat can reactivate a latently infected cell by penetrating in it and transactivating its LTR promoter. In the cytoplasm, Tat is thought to act as a translational activator of HIV-1 mRNAs. Functionally, extracellular circulating Tat can be endocytosed by surrounding uninfected cells via the binding to several surface receptors such as CD26, CXCR4, heparan sulfate proteoglycans (HSPG) or LDLR. Neurons are rarely infected, but they internalize Tat via their LDLR. Through its interaction with nuclear HATs, Tat is potentially able to control the acetylation-dependent cellular gene expression. Modulates the expression of many cellular genes involved in cell survival, proliferation or in coding for cytokines or cytokine receptors. Tat plays a role in T-cell and neurons apoptosis. Tat induced neurotoxicity and apoptosis probably contribute to neuroAIDS. Circulating Tat also acts as a chemokine-like and/or growth factor-like molecule that binds to specific receptors on the surface of the cells, affecting many cellular pathways. In the vascular system, Tat binds to ITGAV/ITGB3 and ITGA5/ITGB1 integrins dimers at the surface of endothelial cells and competes with bFGF for heparin-binding sites, leading to an excess of soluble bFGF. The sequence is that of Protein Tat from Homo sapiens (Human).